A 461-amino-acid polypeptide reads, in one-letter code: Cyclin-A2-4 (461 aa).

The protein belongs to the cyclin family. Cyclin AB subfamily.

The polypeptide is Cyclin-A2-4 (CYCA2-4) (Arabidopsis thaliana (Mouse-ear cress)).